A 540-amino-acid chain; its full sequence is MAVSSCARAFPSFECRSDAEFSGGIPRHDIPNSGKASILSHGSSVHGLSSLIYRFPPNFVRQLSIKARRNCSNIGVAQVVAASWSNNNSSPDFTPVAKAVDAAAAAAAAIAPVDTTVVNEDVALVENETCNDQNVQFDSLPSMKYASFLNSDGSVAIHAGERLGRGIVTDAITTPVVNTSAYFFNKTSELIDFKEKRRASFEYGRYGNPTTVVLEEKISALEGAESTLLMASGMCASTVMLLALVPAGGHIVTTTDCYRKTRIFIETILPKMGITATVIDPADVGALELALNQKKVNLFFTESPTNPFLRCVDIELVSKLCHEKGALVCIDGTFATPLNQKALALGADLVLHSATKFLGGHNDVLAGCISGPLKLVSEIRNLHHILGGALNPNAAYLIIRGMKTLHLRVQQQNSTALRMAEILEAHPKVRHVYYPGLQSHPEHHIAKKQMTGFGGVVSFEVDGDLLTTAKFVDALKIPYIAPSFGGCESIVDQPAIMSYWDLSQSDRAKYGIMDNLVRFSFGVEDFDDLKADILQALDSI.

The N-terminal 78 residues, 1-78 (MAVSSCARAF…RNCSNIGVAQ (78 aa)), are a transit peptide targeting the chloroplast. Residues Tyr-203, Arg-205, Gly-233, Met-234, Tyr-258, Ser-353, and Thr-355 each coordinate pyridoxal 5'-phosphate. Lys-356 carries the post-translational modification N6-(pyridoxal phosphate)lysine.

This sequence belongs to the trans-sulfuration enzymes family. In terms of assembly, forms homotetramers composed of 2 homodimers. It depends on pyridoxal 5'-phosphate as a cofactor.

The protein localises to the plastid. It is found in the chloroplast. It catalyses the reaction O-phospho-L-homoserine + L-cysteine = L,L-cystathionine + phosphate. It carries out the reaction O-succinyl-L-homoserine + L-cysteine = L,L-cystathionine + succinate + H(+). It participates in amino-acid biosynthesis; L-methionine biosynthesis via de novo pathway; L-cystathionine from O-succinyl-L-homoserine: step 1/1. Its activity is regulated as follows. Irreversibly inactivated by DL-propargylglycine. Its function is as follows. Catalyzes the first committed step of methionine (Met) biosynthesis. Catalyzes the formation of L-cystathionine from homoserine esters and L-cysteine, via a gamma-replacement reaction. This is Cystathionine gamma-synthase 1, chloroplastic from Nicotiana tabacum (Common tobacco).